A 676-amino-acid chain; its full sequence is MGVTGILQLPRDRFKRTSFFLWVIILFQRTFSIPLGVIHNSTLQVSDVDKLVCRDKLSSTNQLRSVGLNLEGNGVATDVPSATKRWGFRSGVPPKVVNYEAGEWAENCYNLEIKKPDGSECLPAAPDGIRGFPRCRYVHKVSGTGPCAGDFAFHKEGAFFLYDRLASTVIYRGTTFAEGVVAFLILPQAKKDFFSSHPLREPVNATEDPSSGYYSTTIRYQATGFGTNETEYLFEVDNLTYVQLESRFTPQFLLQLNETIYTSGKRSNTTGKLIWKVNPEIDTTIGEWAFWETKKNLTRKIRSEELSFTVVSNGAKNISGQSPARTSSDPGTNTTTEDHKIMASENSSAMVQVHSQGREAAVSHLTTLATISTSPQSLTTKPGPDNSTHNTPVYKLDISEATQVEQHHRRTDNDSTASDTPSATTAAGPPKAENTNTSKSTDFLDPATTTSPQNHSETAGNNNTHHQDTGEESASSGKLGLITNTIAGVAGLITGGRRTRREAIVNAQPKCNPNLHYWTTQDEGAAIGLAWIPYFGPAAEGIYIEGLMHNQDGLICGLRQLANETTQALQLFLRATTELRTFSILNRKAIDFLLQRWGGTCHILGPDCCIEPHDWTKNITDKIDQIIHDFVDKTLPDQGDNDNWWTGWRQWIPAGIGVTGVIIAVIALFCICKFVF.

The first 32 residues, 1 to 32 (MGVTGILQLPRDRFKRTSFFLWVIILFQRTFS), serve as a signal peptide directing secretion. The Extracellular portion of the chain corresponds to 33 to 650 (IPLGVIHNST…NDNWWTGWRQ (618 aa)). The N-linked (GlcNAc...) asparagine; by host glycan is linked to asparagine 40. Intrachain disulfides connect cysteine 53–cysteine 609, cysteine 108–cysteine 135, cysteine 121–cysteine 147, cysteine 511–cysteine 556, and cysteine 601–cysteine 608. The segment at 54–201 (RDKLSSTNQL…DFFSSHPLRE (148 aa)) is receptor-binding. Asparagine 204, asparagine 228, asparagine 238, asparagine 257, asparagine 268, asparagine 296, asparagine 317, asparagine 333, asparagine 346, asparagine 386, and asparagine 413 each carry an N-linked (GlcNAc...) asparagine; by host glycan. Residues 305-485 (ELSFTVVSNG…SGKLGLITNT (181 aa)) are mucin-like region. The span at 315–335 (AKNISGQSPARTSSDPGTNTT) shows a compositional bias: polar residues. Residues 315 to 337 (AKNISGQSPARTSSDPGTNTTTE) form a disordered region. The span at 373-391 (TSPQSLTTKPGPDNSTHNT) shows a compositional bias: polar residues. Disordered regions lie at residues 373–392 (TSPQ…HNTP) and 402–479 (TQVE…SGKL). The span at 414–432 (DSTASDTPSATTAAGPPKA) shows a compositional bias: low complexity. Over residues 433–464 (ENTNTSKSTDFLDPATTTSPQNHSETAGNNNT) the composition is skewed to polar residues. 3 N-linked (GlcNAc...) asparagine; by host glycosylation sites follow: asparagine 436, asparagine 454, and asparagine 462. The segment at 524 to 539 (GAAIGLAWIPYFGPAA) is fusion peptide. Residues 554 to 595 (LICGLRQLANETTQALQLFLRATTELRTFSILNRKAIDFLLQ) adopt a coiled-coil conformation. An N-linked (GlcNAc...) asparagine; by host glycan is attached at asparagine 563. The stretch at 615 to 634 (WTKNITDKIDQIIHDFVDKT) forms a coiled coil. Residue asparagine 618 is glycosylated (N-linked (GlcNAc...) asparagine; by host). The helical transmembrane segment at 651-671 (WIPAGIGVTGVIIAVIALFCI) threads the bilayer. Residues 660-664 (GVIIA) carry the Important role for host BST2/tetherin antagonism motif. S-palmitoyl cysteine; by host attachment occurs at residues cysteine 670 and cysteine 672. Residues 672 to 676 (CKFVF) are Cytoplasmic-facing.

This sequence belongs to the filoviruses glycoprotein family. As to quaternary structure, homotrimer; each monomer consists of a GP1 and a GP2 subunit linked by disulfide bonds. The resulting peplomers (GP1,2) protrude from the virus surface as spikes. Interacts with host integrin alpha-V/ITGAV. Interacts with host CLEC10A. Also binds to host CD209 and CLEC4M/DC-SIGN(R). Interacts with host FOLR1. Interacts with BST2; this interaction inhibits the antiviral effect of BST2 and this allows viral release from infected cells. Interacts with host FCN1; this interaction enhances viral entry. Interacts with host TLR4; this interaction induces cell death in T-lymphocytes or proinflammatory cytokines and SOCS1 production in monocytes. Interacts with host entry receptor NPC1. In terms of assembly, GP1 and GP2delta are part of GP1,2delta soluble complexes released by ectodomain shedding. The signal peptide region modulates GP's high mannose glycosylation, thereby determining the efficiency of the interactions with DC-SIGN(R). Post-translationally, N-glycosylated. In terms of processing, glycosylated; glycosylation is essential for the activation of dendritic cells and macrophages. O-glycosylated in the mucin-like region. Post-translationally, palmitoylation is not required for its function. In terms of processing, specific enzymatic cleavages in vivo yield mature proteins. The precursor is processed into GP1 and GP2 by host cell furin in the trans Golgi, and maybe by other host proteases, to yield the mature GP1 and GP2 proteins. The cleavage site corresponds to the furin optimal cleavage sequence [KR]-X-[KR]-R. This cleavage does not seem to be required for function. After the internalization of the virus into cell endosomes, GP1 C-terminus is removed by the endosomal proteases cathepsin B, cathepsin L, or both, leaving a 19-kDa N-terminal fragment which is further digested by cathepsin B. This cleaved 19-kDa GP1 can then bind to the host entry receptor NPC1. Proteolytic processing of GP1,2 by host ADAM17 can remove the transmembrane anchor of GP2 and leads to shedding of complexes consisting in GP1 and truncated GP2 (GP1,2delta).

Its subcellular location is the virion membrane. The protein localises to the host cell membrane. It localises to the secreted. Trimeric GP1,2 complexes form the virion surface spikes and mediate the viral entry processes, with GP1 acting as the receptor-binding subunit and GP2 as the membrane fusion subunit. At later times of infection, down-regulates the expression of various host cell surface molecules that are essential for immune surveillance and cell adhesion. Down-modulates several integrins including ITGA1, ITGA2, ITGA3, ITGA4, ITGA5, ITGA6, ITGAV and ITGB1. This decrease in cell adhesion molecules may lead to cell detachment, contributing to the disruption of blood vessel integrity and hemorrhages developed during infection (cytotoxicity). Interacts with host TLR4 and thereby stimulates the differentiation and activation of monocytes leading to bystander death of T-lymphocytes. Down-regulates as well the function of host natural killer cells. Counteracts the antiviral effect of host BST2/tetherin that restricts release of progeny virions from infected cells. However, cooperates with VP40 and host BST2 to activate canonical NF-kappa-B pathway in a manner dependent on neddylation. Its function is as follows. Functions as a decoy for anti-GP1,2 antibodies thereby contributing to viral immune evasion. Interacts and activates host macrophages and dendritic cells inducing up-regulation of cytokine transcription. This effect is mediated throught activation of host TLR4. In terms of biological role, responsible for binding to the receptor(s) on target cells. Interacts with CD209/DC-SIGN and CLEC4M/DC-SIGNR which act as cofactors for virus entry into dendritic cells (DCs) and endothelial cells. Binding to the macrophage specific lectin CLEC10A also seems to enhance virus infectivity. Interaction with FOLR1/folate receptor alpha may be a cofactor for virus entry in some cell types, although results are contradictory. Members of the Tyro3 receptor tyrosine kinase family also seem to be cell entry factors in filovirus infection. Once attached, the virions are internalized through clathrin-dependent endocytosis and/or macropinocytosis. After internalization of the virus into the endosomes of the host cell, proteolysis of GP1 by two cysteine proteases, CTSB/cathepsin B and CTSL/cathepsin L removes the glycan cap and allows GP1 binding to the host entry receptor NPC1. NPC1-binding, Ca(2+) and acidic pH induce a conformational change of GP2, which unmasks its fusion peptide and permit membranes fusion. Functionally, acts as a class I viral fusion protein. Under the current model, the protein has at least 3 conformational states: pre-fusion native state, pre-hairpin intermediate state, and post-fusion hairpin state. During viral and target cell membrane fusion, the coiled coil regions (heptad repeats) assume a trimer-of-hairpins structure, positioning the fusion peptide in close proximity to the C-terminal region of the ectodomain. The formation of this structure appears to drive apposition and subsequent fusion of viral and target cell membranes. Responsible for penetration of the virus into the cell cytoplasm by mediating the fusion of the membrane of the endocytosed virus particle with the endosomal membrane. Low pH in endosomes induces an irreversible conformational change in GP2, releasing the fusion hydrophobic peptide. The sequence is that of Envelope glycoprotein (GP) from Epomops franqueti (Franquet's epauletted fruit bat).